Consider the following 289-residue polypeptide: Deleted in azoospermia-like (289 aa).

Residues 1–20 (MSANAEAQCGSISEDNTHSS) form a disordered region. The RRM domain maps to 36-117 (NTVFVGGIDI…PAIRKQQNLC (82 aa)). The DAZ domain maps to 162–187 (TYAYSSPAVLIQQQVPVGYQPAYNYQ).

Belongs to the RRM DAZ family.

It localises to the cytoplasm. Functionally, RNA-binding protein, which probably plays a central role in gametogenesis in both males and females. Acts by binding to the 3'-UTR of mRNA, specifically recognizing GUU triplets, and promoting the translation of key transcripts. This chain is Deleted in azoospermia-like (DAZL), found in Gallus gallus (Chicken).